The following is a 305-amino-acid chain: Glycine--tRNA ligase alpha subunit (305 aa).

The protein belongs to the class-II aminoacyl-tRNA synthetase family. As to quaternary structure, tetramer of two alpha and two beta subunits.

It localises to the cytoplasm. It carries out the reaction tRNA(Gly) + glycine + ATP = glycyl-tRNA(Gly) + AMP + diphosphate. This chain is Glycine--tRNA ligase alpha subunit, found in Streptococcus pneumoniae (strain 70585).